A 1371-amino-acid polypeptide reads, in one-letter code: Probable serine/threonine-protein kinase DDB_G0293292 (1371 aa).

Protein kinase domains are found at residues 9–269 and 1131–1371; these read NKIL…HPNT and FKEV…QPTL. ATP-binding positions include 15 to 23 and Lys-39; that span reads IDDGNTKRK. Residue Asp-143 is the Proton acceptor of the active site.

It belongs to the protein kinase superfamily. Ser/Thr protein kinase family.

It carries out the reaction L-seryl-[protein] + ATP = O-phospho-L-seryl-[protein] + ADP + H(+). It catalyses the reaction L-threonyl-[protein] + ATP = O-phospho-L-threonyl-[protein] + ADP + H(+). This chain is Probable serine/threonine-protein kinase DDB_G0293292, found in Dictyostelium discoideum (Social amoeba).